A 277-amino-acid polypeptide reads, in one-letter code: Glycerol-3-phosphate acyltransferase (277 aa).

Helical transmembrane passes span 3-23 (LFIF…AIIV), 55-75 (IMVM…AKFL), 79-99 (PVTV…PVFF), 111-131 (IGAL…TWLL), and 155-175 (LILV…ILVL). The disordered stretch occupies residues 207 to 277 (SPATSAEQEF…PKTKTVKEKE (71 aa)). Residues 216–239 (FPGKEVIDTNIDETEKTEQAEAVK) are compositionally biased toward basic and acidic residues. Basic residues-rich tracts occupy residues 240-253 (KPKV…AKKT) and 262-271 (KPKSTKPKTK).

This sequence belongs to the PlsY family. As to quaternary structure, probably interacts with PlsX.

It localises to the cell inner membrane. The catalysed reaction is an acyl phosphate + sn-glycerol 3-phosphate = a 1-acyl-sn-glycero-3-phosphate + phosphate. It participates in lipid metabolism; phospholipid metabolism. In terms of biological role, catalyzes the transfer of an acyl group from acyl-phosphate (acyl-PO(4)) to glycerol-3-phosphate (G3P) to form lysophosphatidic acid (LPA). This enzyme utilizes acyl-phosphate as fatty acyl donor, but not acyl-CoA or acyl-ACP. The chain is Glycerol-3-phosphate acyltransferase from Legionella pneumophila subsp. pneumophila (strain Philadelphia 1 / ATCC 33152 / DSM 7513).